The primary structure comprises 81 residues: Sulfur carrier protein TusA (81 aa).

Residue Cys-19 is the Cysteine persulfide intermediate of the active site.

Belongs to the sulfur carrier protein TusA family.

Its subcellular location is the cytoplasm. Sulfur carrier protein which probably makes part of a sulfur-relay system. The chain is Sulfur carrier protein TusA from Shewanella sediminis (strain HAW-EB3).